The following is a 487-amino-acid chain: UDP-glycosyltransferase 85A7 (487 aa).

UDP-alpha-D-glucose-binding positions include 364–366, 381–389, and 403–406; these read CPQ, HCGWNSTLE, and FSEQ.

This sequence belongs to the UDP-glycosyltransferase family. As to expression, expressed in roots, shoots, leaves and flowers.

This chain is UDP-glycosyltransferase 85A7 (UGT85A7), found in Arabidopsis thaliana (Mouse-ear cress).